Reading from the N-terminus, the 449-residue chain is uncharacterized protein (449 aa).

The protein resides in the mitochondrion. This is an uncharacterized protein from Podospora anserina (strain S / ATCC MYA-4624 / DSM 980 / FGSC 10383) (Pleurage anserina).